The primary structure comprises 257 residues: MAGHTRKWAKVKRKKQKDDRRKSKVWARLSQEIEKAAREGGGDPDANVALSQALERAREEDMAKDTIERAIKRGTGELEEEGREKVTYEGYAPHGVAVFVEGETENINRTVKDLRNLFSDHGGNLGKDGSVAYLFEQKGRFEIAADATDEMTLFEVAVEAGAEEVDETDGTYVVTTGRDAFADVGEALDEAGLPVEANALVRAPTTTVALAPDERDAVRGLIEKINDLRDVTSVYTTLEIDGTPLALGVDVASPAGH.

Residues 1–15 (MAGHTRKWAKVKRKK) are compositionally biased toward basic residues. The interval 1–25 (MAGHTRKWAKVKRKKQKDDRRKSKV) is disordered.

The protein belongs to the TACO1 family.

It is found in the cytoplasm. This chain is Probable transcriptional regulatory protein SRU_2667, found in Salinibacter ruber (strain DSM 13855 / M31).